Reading from the N-terminus, the 435-residue chain is Xylose isomerase (435 aa).

Catalysis depends on residues His99 and Asp102. Residues Glu230, Glu266, His269, Asp294, Asp305, Asp307, and Asp337 each contribute to the Mg(2+) site.

Belongs to the xylose isomerase family. In terms of assembly, homotetramer. The cofactor is Mg(2+).

It localises to the cytoplasm. It carries out the reaction alpha-D-xylose = alpha-D-xylulofuranose. The sequence is that of Xylose isomerase (xylA) from Tetragenococcus halophilus (Pediococcus halophilus).